The following is a 718-amino-acid chain: Polyribonucleotide nucleotidyltransferase (718 aa).

2 residues coordinate Mg(2+): Asp-493 and Asp-499. A KH domain is found at 560–619 (PRVIKKQIDPDKIRNVIGPGGKMINKIIDETGVKIDIEPDGLIYISSSDAEQAEQAIKAI). Residues 629-697 (GEVYLGKVVR…ERGRINLSRK (69 aa)) form the S1 motif domain. Positions 695 to 718 (SRKQALGEEDGKTNNDDKKSTKKT) are disordered. A compositionally biased stretch (basic and acidic residues) spans 699–718 (ALGEEDGKTNNDDKKSTKKT).

It belongs to the polyribonucleotide nucleotidyltransferase family. Requires Mg(2+) as cofactor.

The protein resides in the cytoplasm. The catalysed reaction is RNA(n+1) + phosphate = RNA(n) + a ribonucleoside 5'-diphosphate. In terms of biological role, involved in mRNA degradation. Catalyzes the phosphorolysis of single-stranded polyribonucleotides processively in the 3'- to 5'-direction. This is Polyribonucleotide nucleotidyltransferase from Natranaerobius thermophilus (strain ATCC BAA-1301 / DSM 18059 / JW/NM-WN-LF).